Reading from the N-terminus, the 243-residue chain is Cyclin-dependent kinase 20 (243 aa).

The 240-residue stretch at 4 to 243 (YCILGRIGEG…IHLSCRFLSV (240 aa)) folds into the Protein kinase domain. ATP contacts are provided by residues 10–18 (IGEGAHGIV) and lysine 33. Catalysis depends on aspartate 127, which acts as the Proton acceptor.

It belongs to the protein kinase superfamily. CMGC Ser/Thr protein kinase family. CDC2/CDKX subfamily. In terms of assembly, monomer. Interacts with TBC1D32 and MAK.

Its subcellular location is the nucleus. The protein localises to the cytoplasm. It localises to the cell projection. The protein resides in the cilium. It carries out the reaction L-seryl-[protein] + ATP = O-phospho-L-seryl-[protein] + ADP + H(+). The enzyme catalyses L-threonyl-[protein] + ATP = O-phospho-L-threonyl-[protein] + ADP + H(+). Functionally, required for high-level Shh responses in the developing neural tube. Together with TBC1D32, controls the structure of the primary cilium by coordinating assembly of the ciliary membrane and axoneme, allowing GLI2 to be properly activated in response to SHH signaling. Involved in cell growth. Activates CDK2, a kinase involved in the control of the cell cycle, by phosphorylating residue 'Thr-160'. The sequence is that of Cyclin-dependent kinase 20 (CDK20) from Macaca mulatta (Rhesus macaque).